The sequence spans 554 residues: ATP synthase subunit alpha (554 aa).

172–179 (GDRKTGKT) contributes to the ATP binding site. The tract at residues 528 to 554 (LDEEELEKESVKVKKPAPEKKAKKEQK) is disordered. Basic and acidic residues predominate over residues 535–554 (KESVKVKKPAPEKKAKKEQK).

It belongs to the ATPase alpha/beta chains family. In terms of assembly, F-type ATPases have 2 components, CF(1) - the catalytic core - and CF(0) - the membrane proton channel. CF(1) has five subunits: alpha(3), beta(3), gamma(1), delta(1), epsilon(1). CF(0) has three main subunits: a(1), b(2) and c(9-12). The alpha and beta chains form an alternating ring which encloses part of the gamma chain. CF(1) is attached to CF(0) by a central stalk formed by the gamma and epsilon chains, while a peripheral stalk is formed by the delta and b chains.

Its subcellular location is the cell membrane. It catalyses the reaction ATP + H2O + 4 H(+)(in) = ADP + phosphate + 5 H(+)(out). Its function is as follows. Produces ATP from ADP in the presence of a proton gradient across the membrane. The alpha chain is a regulatory subunit. In Mycolicibacterium paratuberculosis (strain ATCC BAA-968 / K-10) (Mycobacterium paratuberculosis), this protein is ATP synthase subunit alpha.